The following is a 296-amino-acid chain: Glycine and tyrosine-rich protein (296 aa).

An N-terminal signal peptide occupies residues 1–18 (MKVLVTALIISFSTAVLT). A disordered region spans residues 157–280 (MESRLRPQAT…NQPEETPAPN (124 aa)). Over residues 172-264 (TGGQPSTGGK…STGGQPSTGG (93 aa)) the composition is skewed to low complexity.

As to expression, component of the acid-insoluble and acid-soluble organic matrix of calcified layers of the shell (at protein level).

It is found in the secreted. The sequence is that of Glycine and tyrosine-rich protein from Lottia gigantea (Giant owl limpet).